We begin with the raw amino-acid sequence, 102 residues long: Small ribosomal subunit protein uS10 (102 aa).

The protein belongs to the universal ribosomal protein uS10 family. Part of the 30S ribosomal subunit.

Functionally, involved in the binding of tRNA to the ribosomes. This is Small ribosomal subunit protein uS10 from Methanosphaera stadtmanae (strain ATCC 43021 / DSM 3091 / JCM 11832 / MCB-3).